The sequence spans 343 residues: Uroporphyrinogen decarboxylase (343 aa).

Residues 23 to 27, aspartate 73, tyrosine 151, serine 206, and histidine 319 contribute to the substrate site; that span reads RQAGR.

This sequence belongs to the uroporphyrinogen decarboxylase family. As to quaternary structure, homodimer.

The protein resides in the cytoplasm. The enzyme catalyses uroporphyrinogen III + 4 H(+) = coproporphyrinogen III + 4 CO2. The protein operates within porphyrin-containing compound metabolism; protoporphyrin-IX biosynthesis; coproporphyrinogen-III from 5-aminolevulinate: step 4/4. Catalyzes the decarboxylation of four acetate groups of uroporphyrinogen-III to yield coproporphyrinogen-III. This chain is Uroporphyrinogen decarboxylase, found in Sulfurimonas denitrificans (strain ATCC 33889 / DSM 1251) (Thiomicrospira denitrificans (strain ATCC 33889 / DSM 1251)).